A 398-amino-acid chain; its full sequence is MSLNSLDLPGKSEDTRVVVAMSGGVDSSVVAGILKREGYDVVGVTLQLYDHGAAVHRAGSCCAGQDIEDARRVSESLGIPHYVLDYEARFREAVIDPFANSYVSGETPIPCVSCNQTVKFADLLQTARDLGADALATGHYIRSRANGAHRALYRPVDTDRDQSYFLFATTQEQIDYLRFPLGHLPKAQVREIAEELGLTVAKKQDSQDICFVPQGKYSDIISRLKPEAANPGDIVHIDGRTLGRHDGIVHYTVGQRRGIGVATGEALYVVHLDAANARVIVGPREALETHKVFLRDVNWLGDTPIADLPKSGMEVFAKVRSTRPPRPAVLRHADGQTWVELVDGESGIAPGQACVLYSDDSNAARVFGGGFIGRSEREPQAEEMLRRLMANADKASAA.

ATP contacts are provided by residues 20-27 (AMSGGVDS) and leucine 46. The active-site Nucleophile is cysteine 114. An intrachain disulfide couples cysteine 114 to cysteine 210. Glycine 138 is a binding site for ATP. The interval 160-162 (RDQ) is interaction with tRNA. Cysteine 210 serves as the catalytic Cysteine persulfide intermediate.

The protein belongs to the MnmA/TRMU family.

It is found in the cytoplasm. It catalyses the reaction S-sulfanyl-L-cysteinyl-[protein] + uridine(34) in tRNA + AH2 + ATP = 2-thiouridine(34) in tRNA + L-cysteinyl-[protein] + A + AMP + diphosphate + H(+). Catalyzes the 2-thiolation of uridine at the wobble position (U34) of tRNA, leading to the formation of s(2)U34. The sequence is that of tRNA-specific 2-thiouridylase MnmA from Brucella canis (strain ATCC 23365 / NCTC 10854 / RM-666).